The sequence spans 311 residues: Aspartate carbamoyltransferase catalytic subunit (311 aa).

Carbamoyl phosphate is bound by residues arginine 55 and threonine 56. Position 85 (lysine 85) interacts with L-aspartate. Arginine 106, histidine 135, and glutamine 138 together coordinate carbamoyl phosphate. The L-aspartate site is built by arginine 168 and arginine 230. Positions 268 and 269 each coordinate carbamoyl phosphate.

The protein belongs to the aspartate/ornithine carbamoyltransferase superfamily. ATCase family. As to quaternary structure, heterododecamer (2C3:3R2) of six catalytic PyrB chains organized as two trimers (C3), and six regulatory PyrI chains organized as three dimers (R2).

The catalysed reaction is carbamoyl phosphate + L-aspartate = N-carbamoyl-L-aspartate + phosphate + H(+). It participates in pyrimidine metabolism; UMP biosynthesis via de novo pathway; (S)-dihydroorotate from bicarbonate: step 2/3. Its function is as follows. Catalyzes the condensation of carbamoyl phosphate and aspartate to form carbamoyl aspartate and inorganic phosphate, the committed step in the de novo pyrimidine nucleotide biosynthesis pathway. The chain is Aspartate carbamoyltransferase catalytic subunit from Escherichia fergusonii (strain ATCC 35469 / DSM 13698 / CCUG 18766 / IAM 14443 / JCM 21226 / LMG 7866 / NBRC 102419 / NCTC 12128 / CDC 0568-73).